The primary structure comprises 96 residues: Protein Vpr (96 aa).

A homooligomerization region spans residues 1–42 (MEQAPEDQGPQREPYNEWTLDLLEELKNEAVRHFPRPWLHSL). Phosphoserine; by host occurs at positions 79, 94, and 96.

Belongs to the HIV-1 VPR protein family. In terms of assembly, homooligomer, may form homodimer. Interacts with p6-gag region of the Pr55 Gag precursor protein through a (Leu-X-X)4 motif near the C-terminus of the P6gag protein. Interacts with host UNG. May interact with host RAD23A/HHR23A. Interacts with host VPRBP/DCAF1, leading to hijack the CUL4A-RBX1-DDB1-DCAF1/VPRBP complex, mediating ubiquitination of host proteins such as TERT and ZGPAT and arrest of the cell cycle in G2 phase. Post-translationally, phosphorylated on several residues by host. These phosphorylations regulate VPR activity for the nuclear import of the HIV-1 pre-integration complex.

The protein localises to the virion. Its subcellular location is the host nucleus. The protein resides in the host extracellular space. Its function is as follows. During virus replication, may deplete host UNG protein, and incude G2-M cell cycle arrest. Acts by targeting specific host proteins for degradation by the 26S proteasome, through association with the cellular CUL4A-DDB1 E3 ligase complex by direct interaction with host VPRPB/DCAF-1. Cell cycle arrest reportedly occurs within hours of infection and is not blocked by antiviral agents, suggesting that it is initiated by the VPR carried into the virion. Additionally, VPR induces apoptosis in a cell cycle dependent manner suggesting that these two effects are mechanistically linked. Detected in the serum and cerebrospinal fluid of AIDS patient, VPR may also induce cell death to bystander cells. Functionally, during virus entry, plays a role in the transport of the viral pre-integration (PIC) complex to the host nucleus. This function is crucial for viral infection of non-dividing macrophages. May act directly at the nuclear pore complex, by binding nucleoporins phenylalanine-glycine (FG)-repeat regions. In Human immunodeficiency virus type 1 group M subtype F1 (isolate 93BR020) (HIV-1), this protein is Protein Vpr.